The sequence spans 1742 residues: NACHT and WD repeat domain-containing protein 2 (1742 aa).

5 LRR repeats span residues 386–410 (FYEY…GHIN), 677–698 (LEDV…TRPS), 724–747 (VKNV…LYLQ), 883–906 (YSQE…VTAF), and 925–953 (LPKL…SSMD). Residues 410 to 737 (NPLIIYGGPC…TLLVWANRHL (328 aa)) enclose the NACHT domain. WD repeat units lie at residues 963 to 1004 (LSSS…LLRQ), 1007 to 1046 (TAQS…LLSE), 1140 to 1179 (FSGG…SPQL), 1229 to 1271 (KHNE…ASLQ), 1272 to 1311 (EISG…AMSN), 1314 to 1353 (KTGK…IEAV), 1355 to 1394 (KHEG…NLFR), 1396 to 1434 (NGQR…RVCN), 1476 to 1516 (EDGT…ICRR), 1522 to 1564 (NFLK…VHAS), and 1614 to 1653 (SLYK…DAAL).

The polypeptide is NACHT and WD repeat domain-containing protein 2 (NWD2) (Homo sapiens (Human)).